A 171-amino-acid polypeptide reads, in one-letter code: Methyl-coenzyme M reductase operon protein D (171 aa).

MCR is composed of three subunits: alpha, beta, and gamma. The function of proteins C and D is not known.

The chain is Methyl-coenzyme M reductase operon protein D (mcrD) from Methanosarcina barkeri (strain Fusaro / DSM 804).